Reading from the N-terminus, the 360-residue chain is Ribosomal RNA large subunit methyltransferase M (360 aa).

S-adenosyl-L-methionine contacts are provided by residues serine 190, 223–226, aspartate 242, aspartate 262, and aspartate 280; that span reads CPGG. The active-site Proton acceptor is lysine 309.

The protein belongs to the class I-like SAM-binding methyltransferase superfamily. RNA methyltransferase RlmE family. RlmM subfamily. Monomer.

It is found in the cytoplasm. The enzyme catalyses cytidine(2498) in 23S rRNA + S-adenosyl-L-methionine = 2'-O-methylcytidine(2498) in 23S rRNA + S-adenosyl-L-homocysteine + H(+). Catalyzes the 2'-O-methylation at nucleotide C2498 in 23S rRNA. The sequence is that of Ribosomal RNA large subunit methyltransferase M from Haemophilus ducreyi (strain 35000HP / ATCC 700724).